Reading from the N-terminus, the 151-residue chain is Large-conductance mechanosensitive channel (151 aa).

Helical transmembrane passes span 12-32 and 71-91; these read GNIVDLAVAVVIGTAFTALVT and VLLSAAINFFLIAFAVYFLVV. The segment at 122–151 is disordered; that stretch reads AQTNGDSPGRHGGRGTPSPTDGPRASTESQ.

It belongs to the MscL family. In terms of assembly, homopentamer.

It localises to the cell membrane. Functionally, channel that opens in response to stretch forces in the membrane lipid bilayer. May participate in the regulation of osmotic pressure changes within the cell. In Mycobacterium tuberculosis (strain CDC 1551 / Oshkosh), this protein is Large-conductance mechanosensitive channel.